The following is a 100-amino-acid chain: MQTHVRRVALQALRPCLRAGLMAPKFPVRFATTAVSGELLTKTPYTRPGYAAQWTCLVVLFLKNQLLMRLFFAFVAYVVAMKVFGARFHVDHDEDATPAE.

The transit peptide at 1-30 directs the protein to the mitochondrion; it reads MQTHVRRVALQALRPCLRAGLMAPKFPVRF. The helical transmembrane segment at 66-86 threads the bilayer; the sequence is LLMRLFFAFVAYVVAMKVFGA.

As to quaternary structure, plants bc1 complex contains 10 subunits; 3 respiratory subunits, 2 core proteins and 5 low-molecular weight proteins.

The protein resides in the mitochondrion inner membrane. Functionally, this is a component of the ubiquinol-cytochrome c reductase complex (complex III or cytochrome b-c1 complex), which is part of the mitochondrial respiratory chain. This is Ubiquinol-cytochrome-C reductase complex subunit IX, mitochondrial from Euglena gracilis.